The primary structure comprises 416 residues: Serine hydroxymethyltransferase (416 aa).

Residues L121 and 125 to 127 (GHL) each bind (6S)-5,6,7,8-tetrahydrofolate. K229 bears the N6-(pyridoxal phosphate)lysine mark.

This sequence belongs to the SHMT family. Homodimer. It depends on pyridoxal 5'-phosphate as a cofactor.

The protein localises to the cytoplasm. The catalysed reaction is (6R)-5,10-methylene-5,6,7,8-tetrahydrofolate + glycine + H2O = (6S)-5,6,7,8-tetrahydrofolate + L-serine. It functions in the pathway one-carbon metabolism; tetrahydrofolate interconversion. The protein operates within amino-acid biosynthesis; glycine biosynthesis; glycine from L-serine: step 1/1. Catalyzes the reversible interconversion of serine and glycine with tetrahydrofolate (THF) serving as the one-carbon carrier. This reaction serves as the major source of one-carbon groups required for the biosynthesis of purines, thymidylate, methionine, and other important biomolecules. Also exhibits THF-independent aldolase activity toward beta-hydroxyamino acids, producing glycine and aldehydes, via a retro-aldol mechanism. This is Serine hydroxymethyltransferase from Neisseria meningitidis serogroup B (strain ATCC BAA-335 / MC58).